The primary structure comprises 214 residues: Triosephosphate isomerase (214 aa).

6-8 contacts substrate; that stretch reads NLK. The active-site Electrophile is histidine 85. The active-site Proton acceptor is the glutamate 133. Residues isoleucine 138, glycine 173, and 194-195 contribute to the substrate site; that span reads AS.

Belongs to the triosephosphate isomerase family. In terms of assembly, homotetramer; dimer of dimers.

It localises to the cytoplasm. It carries out the reaction D-glyceraldehyde 3-phosphate = dihydroxyacetone phosphate. Its pathway is carbohydrate biosynthesis; gluconeogenesis. It functions in the pathway carbohydrate degradation; glycolysis; D-glyceraldehyde 3-phosphate from glycerone phosphate: step 1/1. Its function is as follows. Involved in the gluconeogenesis. Catalyzes stereospecifically the conversion of dihydroxyacetone phosphate (DHAP) to D-glyceraldehyde-3-phosphate (G3P). The sequence is that of Triosephosphate isomerase from Halobacterium salinarum (strain ATCC 700922 / JCM 11081 / NRC-1) (Halobacterium halobium).